We begin with the raw amino-acid sequence, 79 residues long: DNA-directed RNA polymerase subunit omega (79 aa).

This sequence belongs to the RNA polymerase subunit omega family. The RNAP catalytic core consists of 2 alpha, 1 beta, 1 beta' and 1 omega subunit. When a sigma factor is associated with the core the holoenzyme is formed, which can initiate transcription.

The catalysed reaction is RNA(n) + a ribonucleoside 5'-triphosphate = RNA(n+1) + diphosphate. Promotes RNA polymerase assembly. Latches the N- and C-terminal regions of the beta' subunit thereby facilitating its interaction with the beta and alpha subunits. The sequence is that of DNA-directed RNA polymerase subunit omega from Bdellovibrio bacteriovorus (strain ATCC 15356 / DSM 50701 / NCIMB 9529 / HD100).